The following is a 156-amino-acid chain: Protein LlR18B (156 aa).

Trans-zeatin is bound by residues Asp8 and Asp28. The Ca(2+) site is built by Pro32 and Ile38. Positions 54, 133, and 136 each coordinate trans-zeatin.

This sequence belongs to the BetVI family. In terms of tissue distribution, ubiquitous, with higher levels in roots.

Its subcellular location is the cytoplasm. The protein localises to the cytosol. In terms of biological role, class II ribonuclease (RNase), with low activity on single-strand RNA. Binds to cytokinins. Interacts with melatonin. This is Protein LlR18B (LLR18B) from Lupinus luteus (European yellow lupine).